Reading from the N-terminus, the 297-residue chain is 32 kDa beta-galactoside-binding lectin lec-3 (297 aa).

2 consecutive Galectin domains span residues 11-142 and 151-290; these read YRSK…VQWG and ESGI…IQVV. 224–230 is a binding site for a beta-D-galactoside; it reads WGNEERE.

Functionally, binds galactose. This Caenorhabditis elegans protein is 32 kDa beta-galactoside-binding lectin lec-3 (lec-3).